The primary structure comprises 42 residues: Potassium channel toxin gamma-KTx 1.5 (42 aa).

Cystine bridges form between Cys5–Cys23, Cys11–Cys34, Cys20–Cys39, and Cys24–Cys41.

Belongs to the ergtoxin family. Gamma-KTx 1 subfamily. Expressed by the venom gland.

It is found in the secreted. Its function is as follows. Blocks Kv11/ERG potassium channels. The sequence is that of Potassium channel toxin gamma-KTx 1.5 from Centruroides limpidus (Mexican scorpion).